The following is a 325-amino-acid chain: NADH-quinone oxidoreductase subunit H (325 aa).

8 helical membrane-spanning segments follow: residues 11 to 31 (ILLSILKAVVILLVVVTCGAF), 81 to 101 (VIFTLAPMIAFTSLLLAFAIV), 114 to 134 (IGILFFLMMAGLAVYAVLFAG), 154 to 174 (LSYEVFLGLSLMGVVAQAGSF), 186 to 206 (IWNVIPQFFGFVTFAIAGVAV), 237 to 257 (FFVGEYIGIVTISALMVTLFF), 265 to 285 (LPPFIWFALKTAFFMMMFILI), and 304 to 324 (VCLPLTLVNLLVTAAVILWQA).

It belongs to the complex I subunit 1 family. As to quaternary structure, NDH-1 is composed of 13 different subunits. Subunits NuoA, H, J, K, L, M, N constitute the membrane sector of the complex.

The protein localises to the cell inner membrane. The enzyme catalyses a quinone + NADH + 5 H(+)(in) = a quinol + NAD(+) + 4 H(+)(out). Its function is as follows. NDH-1 shuttles electrons from NADH, via FMN and iron-sulfur (Fe-S) centers, to quinones in the respiratory chain. The immediate electron acceptor for the enzyme in this species is believed to be ubiquinone. Couples the redox reaction to proton translocation (for every two electrons transferred, four hydrogen ions are translocated across the cytoplasmic membrane), and thus conserves the redox energy in a proton gradient. This subunit may bind ubiquinone. This Enterobacter sp. (strain 638) protein is NADH-quinone oxidoreductase subunit H.